Consider the following 212-residue polypeptide: 2,3-bisphosphoglycerate-dependent phosphoglycerate mutase (212 aa).

Residues 9–16 (RHGQSEWN), 22–23 (TG), Arg-61, 88–91 (ERDY), Lys-99, 115–116 (RR), and 159–160 (GN) contribute to the substrate site. His-10 serves as the catalytic Tele-phosphohistidine intermediate. Glu-88 serves as the catalytic Proton donor/acceptor.

This sequence belongs to the phosphoglycerate mutase family. BPG-dependent PGAM subfamily. Homodimer.

The enzyme catalyses (2R)-2-phosphoglycerate = (2R)-3-phosphoglycerate. The protein operates within carbohydrate degradation; glycolysis; pyruvate from D-glyceraldehyde 3-phosphate: step 3/5. Its function is as follows. Catalyzes the interconversion of 2-phosphoglycerate and 3-phosphoglycerate. The sequence is that of 2,3-bisphosphoglycerate-dependent phosphoglycerate mutase from Methylorubrum populi (strain ATCC BAA-705 / NCIMB 13946 / BJ001) (Methylobacterium populi).